A 383-amino-acid chain; its full sequence is Delta(12) acyl-lipid conjugase (11E,13E-forming) (383 aa).

Positions 1–30 (MGEVGPTNRTKTKLDKQQESENRVPHEPPP) are disordered. Residues 12-26 (TKLDKQQESENRVPH) show a composition bias toward basic and acidic residues. 2 helical membrane-spanning segments follow: residues 56-76 (VIHD…YIPM) and 84-104 (VAWP…LVLG). A Histidine box-1 motif is present at residues 105 to 109 (HECGH). Residues 141–145 (HRRHH) carry the Histidine box-2 motif. 3 helical membrane-spanning segments follow: residues 179–199 (FLMI…FNAN), 225–245 (VIAS…IALA), and 249–269 (VWLI…IVLI). The Histidine box-3 motif lies at 315 to 319 (HLVHH).

This sequence belongs to the fatty acid desaturase type 1 family. As to expression, expressed in developing seeds, but not in leaves.

The protein resides in the membrane. It catalyses the reaction a (9Z,12Z)-octadecadienoyl-containing glycerolipid + 2 Fe(II)-[cytochrome b5] + O2 + 2 H(+) = a (9Z,11E,13E)-octadecatrienoyl-containing glycerolipid + 2 Fe(III)-[cytochrome b5] + 2 H2O. The catalysed reaction is (9Z,12Z,15Z)-octadecatrienoyl-containing glycerolipid + 2 Fe(II)-[cytochrome b5] + O2 + 2 H(+) = a (9Z,11E,13E,15Z)-octadecatetraenoyl-containing glycerolipid + 2 Fe(III)-[cytochrome b5] + 2 H2O. The protein operates within lipid metabolism; polyunsaturated fatty acid biosynthesis. In terms of biological role, converts linoleic acid to alpha-eleostearic acid (18:3(9Z,11E,13E)) and alpha-linolenic acid to alpha-parinaric acid (18:4(9Z,11E, 13E, 15Z)). Converts a single cis double bond at carbon 12 to two conjugated trans bonds at positions 11 and 13. This Impatiens balsamina (Balsam) protein is Delta(12) acyl-lipid conjugase (11E,13E-forming).